A 212-amino-acid polypeptide reads, in one-letter code: Thiamine-phosphate synthase (212 aa).

Residues 33–37 (QMRFK) and Asn-65 contribute to the 4-amino-2-methyl-5-(diphosphooxymethyl)pyrimidine site. Mg(2+)-binding residues include Asp-66 and Asp-85. Thr-104 provides a ligand contact to 4-amino-2-methyl-5-(diphosphooxymethyl)pyrimidine. Residue 130 to 132 (TNT) participates in 2-[(2R,5Z)-2-carboxy-4-methylthiazol-5(2H)-ylidene]ethyl phosphate binding. Lys-133 is a binding site for 4-amino-2-methyl-5-(diphosphooxymethyl)pyrimidine. Position 166 (Gly-166) interacts with 2-[(2R,5Z)-2-carboxy-4-methylthiazol-5(2H)-ylidene]ethyl phosphate.

Belongs to the thiamine-phosphate synthase family. The cofactor is Mg(2+).

The catalysed reaction is 2-[(2R,5Z)-2-carboxy-4-methylthiazol-5(2H)-ylidene]ethyl phosphate + 4-amino-2-methyl-5-(diphosphooxymethyl)pyrimidine + 2 H(+) = thiamine phosphate + CO2 + diphosphate. It catalyses the reaction 2-(2-carboxy-4-methylthiazol-5-yl)ethyl phosphate + 4-amino-2-methyl-5-(diphosphooxymethyl)pyrimidine + 2 H(+) = thiamine phosphate + CO2 + diphosphate. The enzyme catalyses 4-methyl-5-(2-phosphooxyethyl)-thiazole + 4-amino-2-methyl-5-(diphosphooxymethyl)pyrimidine + H(+) = thiamine phosphate + diphosphate. It participates in cofactor biosynthesis; thiamine diphosphate biosynthesis; thiamine phosphate from 4-amino-2-methyl-5-diphosphomethylpyrimidine and 4-methyl-5-(2-phosphoethyl)-thiazole: step 1/1. In terms of biological role, condenses 4-methyl-5-(beta-hydroxyethyl)thiazole monophosphate (THZ-P) and 2-methyl-4-amino-5-hydroxymethyl pyrimidine pyrophosphate (HMP-PP) to form thiamine monophosphate (TMP). The polypeptide is Thiamine-phosphate synthase (Flavobacterium johnsoniae (strain ATCC 17061 / DSM 2064 / JCM 8514 / BCRC 14874 / CCUG 350202 / NBRC 14942 / NCIMB 11054 / UW101) (Cytophaga johnsonae)).